The sequence spans 431 residues: Na(+)-translocating NADH-quinone reductase subunit F (431 aa).

A helical membrane pass occupies residues 10 to 30 (IFVASAAFCSLGLILVAVILL). Positions 41-133 (CKLKINNDDS…DLCLEVEERY (93 aa)) constitute a 2Fe-2S ferredoxin-type domain. [2Fe-2S] cluster-binding residues include C76, C82, C85, and C117. The FAD-binding FR-type domain occupies 136-286 (ASSWEGTVVS…SGPYGESFMK (151 aa)). Residues 289–413 (NRPVIFLIGG…ALHNSSILTL (125 aa)) are catalytic.

The protein belongs to the NqrF family. As to quaternary structure, composed of six subunits; NqrA, NqrB, NqrC, NqrD, NqrE and NqrF. [2Fe-2S] cluster is required as a cofactor. Requires FAD as cofactor.

Its subcellular location is the cell inner membrane. It catalyses the reaction a ubiquinone + n Na(+)(in) + NADH + H(+) = a ubiquinol + n Na(+)(out) + NAD(+). In terms of biological role, NQR complex catalyzes the reduction of ubiquinone-1 to ubiquinol by two successive reactions, coupled with the transport of Na(+) ions from the cytoplasm to the periplasm. The first step is catalyzed by NqrF, which accepts electrons from NADH and reduces ubiquinone-1 to ubisemiquinone by a one-electron transfer pathway. The protein is Na(+)-translocating NADH-quinone reductase subunit F of Chlamydia trachomatis serovar D (strain ATCC VR-885 / DSM 19411 / UW-3/Cx).